Here is a 558-residue protein sequence, read N- to C-terminus: T-complex protein 1 subunit eta (558 aa).

The disordered stretch occupies residues 524–558 (VRNPKSEQPKAPPGGLRRGGPQGMAGLAKNARLGK).

This sequence belongs to the TCP-1 chaperonin family. In terms of assembly, heterooligomeric complex of about 850 to 900 kDa that forms two stacked rings, 12 to 16 nm in diameter.

The protein resides in the cytoplasm. Functionally, molecular chaperone; assists the folding of proteins upon ATP hydrolysis. Known to play a role, in vitro, in the folding of actin and tubulin. The chain is T-complex protein 1 subunit eta from Tetrahymena pyriformis.